A 231-amino-acid polypeptide reads, in one-letter code: Ribonuclease 3 (231 aa).

The RNase III domain maps to 5 to 134 (QKKLKNDYGL…FLGALFIDQG (130 aa)). Position 47 (E47) interacts with Mg(2+). The active site involves D51. Mg(2+) is bound by residues N120 and E123. The active site involves E123. Positions 160–229 (DYKTELQEVL…AENAIKGQNH (70 aa)) constitute a DRBM domain.

Belongs to the ribonuclease III family. Homodimer. The cofactor is Mg(2+).

The protein resides in the cytoplasm. It carries out the reaction Endonucleolytic cleavage to 5'-phosphomonoester.. In terms of biological role, digests double-stranded RNA. Involved in the processing of primary rRNA transcript to yield the immediate precursors to the large and small rRNAs (23S and 16S). Processes some mRNAs, and tRNAs when they are encoded in the rRNA operon. Processes pre-crRNA and tracrRNA of type II CRISPR loci if present in the organism. In Lactococcus lactis subsp. lactis (strain IL1403) (Streptococcus lactis), this protein is Ribonuclease 3.